A 440-amino-acid polypeptide reads, in one-letter code: Phosphatidylglycerol--prolipoprotein diacylglyceryl transferase (440 aa).

The next 4 membrane-spanning stretches (helical) occupy residues 21-41 (VPIR…LLIG), 53-73 (GVIY…GRLY), 96-116 (IWDG…GAWI), and 122-142 (GIPL…AQAI). Arg144 lines the a 1,2-diacyl-sn-glycero-3-phospho-(1'-sn-glycerol) pocket. Transmembrane regions (helical) follow at residues 189–209 (VALV…LIFV) and 256–276 (INSF…MAAP). The interval 280–440 (EDPESLRGNQ…ARLRDRLSGR (161 aa)) is disordered. The segment covering 299–330 (EPATVAATTEAATEGVAAPADGAEAAGADATA) has biased composition (low complexity). The segment covering 332 to 346 (RPEESAEPDVEKPES) has biased composition (basic and acidic residues). Positions 347–417 (EETEAEAAEE…PEQPVAEEPE (71 aa)) are enriched in acidic residues. The segment covering 424–440 (ETKRRWGARLRDRLSGR) has biased composition (basic and acidic residues).

The protein belongs to the Lgt family.

The protein resides in the cell membrane. The enzyme catalyses L-cysteinyl-[prolipoprotein] + a 1,2-diacyl-sn-glycero-3-phospho-(1'-sn-glycerol) = an S-1,2-diacyl-sn-glyceryl-L-cysteinyl-[prolipoprotein] + sn-glycerol 1-phosphate + H(+). Its pathway is protein modification; lipoprotein biosynthesis (diacylglyceryl transfer). Catalyzes the transfer of the diacylglyceryl group from phosphatidylglycerol to the sulfhydryl group of the N-terminal cysteine of a prolipoprotein, the first step in the formation of mature lipoproteins. The chain is Phosphatidylglycerol--prolipoprotein diacylglyceryl transferase from Mycobacterium avium (strain 104).